Reading from the N-terminus, the 401-residue chain is Phosphoglycerate kinase (401 aa).

Residues 26–28, R41, 64–67, R123, and R156 each bind substrate; these read DLN and HLGR. Residues K207, G298, E329, and 355–358 contribute to the ATP site; that span reads GGDS.

It belongs to the phosphoglycerate kinase family. In terms of assembly, monomer.

The protein resides in the cytoplasm. The enzyme catalyses (2R)-3-phosphoglycerate + ATP = (2R)-3-phospho-glyceroyl phosphate + ADP. It participates in carbohydrate degradation; glycolysis; pyruvate from D-glyceraldehyde 3-phosphate: step 2/5. The sequence is that of Phosphoglycerate kinase from Bdellovibrio bacteriovorus (strain ATCC 15356 / DSM 50701 / NCIMB 9529 / HD100).